The following is a 530-amino-acid chain: Light-independent protochlorophyllide reductase subunit B (530 aa).

D36 lines the [4Fe-4S] cluster pocket. D290 functions as the Proton donor in the catalytic mechanism. 425-426 (GL) serves as a coordination point for substrate. The interval 448–483 (LGHLGGHASETKTSSKGINQSPNNHSPAGESIHWTS) is disordered. A compositionally biased stretch (polar residues) spans 458 to 473 (TKTSSKGINQSPNNHS).

The protein belongs to the ChlB/BchB/BchZ family. As to quaternary structure, protochlorophyllide reductase is composed of three subunits; ChlL, ChlN and ChlB. Forms a heterotetramer of two ChlB and two ChlN subunits. The cofactor is [4Fe-4S] cluster.

The catalysed reaction is chlorophyllide a + oxidized 2[4Fe-4S]-[ferredoxin] + 2 ADP + 2 phosphate = protochlorophyllide a + reduced 2[4Fe-4S]-[ferredoxin] + 2 ATP + 2 H2O. The protein operates within porphyrin-containing compound metabolism; chlorophyll biosynthesis (light-independent). Component of the dark-operative protochlorophyllide reductase (DPOR) that uses Mg-ATP and reduced ferredoxin to reduce ring D of protochlorophyllide (Pchlide) to form chlorophyllide a (Chlide). This reaction is light-independent. The NB-protein (ChlN-ChlB) is the catalytic component of the complex. The polypeptide is Light-independent protochlorophyllide reductase subunit B (Prochlorococcus marinus (strain SARG / CCMP1375 / SS120)).